Consider the following 402-residue polypeptide: Putative epoxide hydrolase AFT8 (402 aa).

Belongs to the peptidase S33 family.

Its pathway is mycotoxin biosynthesis. Its function is as follows. Putative epoxide hydrolase; part of the gene clusters that mediate the biosynthesis of the host-selective toxins (HSTs) AF-toxins responsible for Alternaria black spot of strawberry disease by the strawberry pathotype. AF-toxin I and III are valine derivatives of 2,3-dyhydroxy-isovaleric acid and 2-hydroxy-isovaleric acid respectively, while AF II is an isoleucine derivative of 2-hydroxy-valeric acid. These derivatives are bound to a 9,10-epoxy-8-hydroxy-9-methyl-decatrienoic acid (EDA) moiety. On cellular level, AF-toxins affect plasma membrane of susceptible cells and cause a sudden increase in loss of K(+) after a few minutes of toxin treatment. The aldo-keto reductase AFTS1 catalyzes the conversion of 2-keto-isovaleric acid (2-KIV) to 2-hydroxy-isovaleric acid (2-HIV) by reduction of its ketone to an alcohol. The acyl-CoA ligase AFT1, the hydrolase AFT2 and the enoyl-CoA hydratases AFT3 and AFT6, but also the polyketide synthase AFT9, the acyl-CoA dehydrogenase AFT10, the cytochrome P450 monooxygenase AFT11 and the oxidoreductase AFT12 are all involved in the biosynthesis of the AK-, AF- and ACT-toxin common EDA structural moiety. The exact function of each enzyme, and of additional enzymes identified within the AF-toxin clusters have still to be determined. In Alternaria alternata (Alternaria rot fungus), this protein is Putative epoxide hydrolase AFT8.